Here is a 166-residue protein sequence, read N- to C-terminus: Phospholipase A2 inhibitor CgMIP-II (166 aa).

The N-terminal stretch at 1–19 (MRLILLSGLLLLGTFLANG) is a signal peptide. The C-type lectin domain maps to 46–161 (LRYALMTVHN…CDDNLLVVCE (116 aa)). 2 cysteine pairs are disulfide-bonded: Cys83/Cys160 and Cys138/Cys152. The N-linked (GlcNAc...) asparagine glycan is linked to Asn122.

The protein belongs to the alpha-type phospholipase A2 inhibitor family. As to quaternary structure, homomer composed of 20-25-kDa subunits that form oligomers of 180 kDa. N-glycosylated. The glycosidic chain may contain superficial sialic acid residues. In terms of tissue distribution, expressed by the liver.

Its subcellular location is the secreted. Selectively inhibits the toxic properties of myotoxin-II from the same venom (AC P81165). Does not inhibit PLA2, anti-coagulant and lethal activities of the basic myotoxin I from the same venom (AC P0DQP6), nor the different crotoxin forms (heterodimer or subunit B alone). Does not block the enzymatic activity of crude acidic PLA2 fractions from the same venom. This chain is Phospholipase A2 inhibitor CgMIP-II, found in Cerrophidion godmani (Porthidium godmani).